The sequence spans 109 residues: Flagellar hook-basal body complex protein FliE (109 aa).

A disordered region spans residues 1 to 38 (MQAIHNDKSLLSPFSELNTDNRTQREESGSTFKEQKGG). The segment covering 22-38 (RTQREESGSTFKEQKGG) has biased composition (basic and acidic residues).

The protein belongs to the FliE family.

Its subcellular location is the bacterial flagellum basal body. This chain is Flagellar hook-basal body complex protein FliE, found in Helicobacter acinonychis (strain Sheeba).